The following is a 261-amino-acid chain: Carnitinyl-CoA dehydratase (261 aa).

Residue E111 is the Nucleophile of the active site. E131 serves as the catalytic Proton acceptor.

The protein belongs to the enoyl-CoA hydratase/isomerase family.

It carries out the reaction (R)-carnitinyl-CoA = crotonobetainyl-CoA + H2O. Its pathway is amine and polyamine metabolism; carnitine metabolism. Its function is as follows. Catalyzes the reversible dehydration of L-carnitinyl-CoA to crotonobetainyl-CoA. The sequence is that of Carnitinyl-CoA dehydratase from Salmonella arizonae (strain ATCC BAA-731 / CDC346-86 / RSK2980).